Reading from the N-terminus, the 340-residue chain is Meiotic recombination protein DMC1/LIM15 homolog (340 aa).

An ATP-binding site is contributed by Gly126–Thr133. Arg230 is a binding site for dsDNA. Residues Arg230, Phe233, Arg236, Arg242, and Arg311 each contribute to the ssDNA site. Arg236 and Arg242 together coordinate dsDNA.

It belongs to the RecA family. DMC1 subfamily. In terms of assembly, double stacked ring-shaped homooctamer. Interacts with BRCA2. Interacts with the MND1-PSMC3IP heterodimer. Interacts with RAD51AP1; the interaction is direct and stimulates DMC1-mediated homologous recombination. As to expression, testis.

It localises to the nucleus. It is found in the chromosome. Functionally, participates in meiotic recombination, specifically in homologous strand assimilation, which is required for the resolution of meiotic double-strand breaks. The sequence is that of Meiotic recombination protein DMC1/LIM15 homolog from Mus musculus (Mouse).